The following is a 490-amino-acid chain: NAI2-like protein (490 aa).

An N-terminal signal peptide occupies residues 1 to 24 (MGRKYVVLGLAVCLFLSSFNEVSC). Disordered stretches follow at residues 43-83 (EEGE…VDKF) and 155-206 (AATN…FNKG). A coiled-coil region spans residues 136-163 (IADERRQRLEDIERKLKAAAATNIVVED). A compositionally biased stretch (basic and acidic residues) spans 171-183 (KVEETQEVVKFES). The span at 184-199 (ESSSASSESRRQSSSS) shows a compositional bias: low complexity. A coiled-coil region spans residues 433-465 (TFEKTVANLSRVIEEASQAYEEYHVVVRKWKEE).

This chain is NAI2-like protein, found in Arabidopsis thaliana (Mouse-ear cress).